The primary structure comprises 120 residues: Large ribosomal subunit protein uL18 (120 aa).

It belongs to the universal ribosomal protein uL18 family. In terms of assembly, part of the 50S ribosomal subunit; part of the 5S rRNA/L5/L18/L25 subcomplex. Contacts the 5S and 23S rRNAs.

Its function is as follows. This is one of the proteins that bind and probably mediate the attachment of the 5S RNA into the large ribosomal subunit, where it forms part of the central protuberance. The chain is Large ribosomal subunit protein uL18 from Methylobacterium radiotolerans (strain ATCC 27329 / DSM 1819 / JCM 2831 / NBRC 15690 / NCIMB 10815 / 0-1).